The sequence spans 459 residues: uncharacterized protein (459 aa).

In terms of domain architecture, TRAM spans Lys-9–Lys-67. 4 residues coordinate [4Fe-4S] cluster: Cys-80, Cys-86, Cys-89, and Cys-168. Residues Gln-292, Tyr-321, Asp-342, and Asp-390 each contribute to the S-adenosyl-L-methionine site. Cys-417 (nucleophile) is an active-site residue.

The protein belongs to the class I-like SAM-binding methyltransferase superfamily. RNA M5U methyltransferase family.

This is an uncharacterized protein from Bacillus anthracis.